We begin with the raw amino-acid sequence, 146 residues long: 3-hydroxyacyl-[acyl-carrier-protein] dehydratase FabZ (146 aa).

Residue His-48 is part of the active site.

This sequence belongs to the thioester dehydratase family. FabZ subfamily.

It is found in the cytoplasm. It carries out the reaction a (3R)-hydroxyacyl-[ACP] = a (2E)-enoyl-[ACP] + H2O. In terms of biological role, involved in unsaturated fatty acids biosynthesis. Catalyzes the dehydration of short chain beta-hydroxyacyl-ACPs and long chain saturated and unsaturated beta-hydroxyacyl-ACPs. In Acetivibrio thermocellus (strain ATCC 27405 / DSM 1237 / JCM 9322 / NBRC 103400 / NCIMB 10682 / NRRL B-4536 / VPI 7372) (Clostridium thermocellum), this protein is 3-hydroxyacyl-[acyl-carrier-protein] dehydratase FabZ.